The chain runs to 286 residues: Prepilin leader peptidase/N-methyltransferase (286 aa).

A helical transmembrane segment spans residues 10–30 (FAVPLAAVLGLLVGSFLNVVI). 4 residues coordinate Zn(2+): C70, C73, C95, and C98. 6 helical membrane passes run 102 to 122 (ISIR…LVAW), 126 to 146 (WSWI…LTFI), 157 to 177 (MTLP…FVPL), 181 to 201 (VLGA…YKLL), 224 to 244 (ISAL…AAIV), and 250 to 270 (GRHF…FTAN).

This sequence belongs to the peptidase A24 family. Zn(2+) is required as a cofactor.

The protein resides in the cell inner membrane. It catalyses the reaction Typically cleaves a -Gly-|-Phe- bond to release an N-terminal, basic peptide of 5-8 residues from type IV prepilin, and then N-methylates the new N-terminal amino group, the methyl donor being S-adenosyl-L-methionine.. Plays an essential role in type IV pili and type II pseudopili formation by proteolytically removing the leader sequence from substrate proteins and subsequently monomethylating the alpha-amino group of the newly exposed N-terminal phenylalanine. In Neisseria gonorrhoeae, this protein is Prepilin leader peptidase/N-methyltransferase (pilD).